The chain runs to 219 residues: tRNA (guanine-N(7)-)-methyltransferase (219 aa).

4 residues coordinate S-adenosyl-L-methionine: Glu43, Asp68, Glu101, and Asn124. Lys128 and Asp160 together coordinate substrate.

Belongs to the class I-like SAM-binding methyltransferase superfamily. TrmB family.

The catalysed reaction is guanosine(46) in tRNA + S-adenosyl-L-methionine = N(7)-methylguanosine(46) in tRNA + S-adenosyl-L-homocysteine. The protein operates within tRNA modification; N(7)-methylguanine-tRNA biosynthesis. In terms of biological role, catalyzes the formation of N(7)-methylguanine at position 46 (m7G46) in tRNA. The sequence is that of tRNA (guanine-N(7)-)-methyltransferase from Clostridium botulinum (strain Eklund 17B / Type B).